We begin with the raw amino-acid sequence, 212 residues long: uncharacterized protein (212 aa).

G53 and E74 together coordinate S-adenosyl-L-methionine.

The protein belongs to the methyltransferase superfamily. YrrT family.

Could be a S-adenosyl-L-methionine-dependent methyltransferase. This is an uncharacterized protein from Exiguobacterium sibiricum (strain DSM 17290 / CCUG 55495 / CIP 109462 / JCM 13490 / 255-15).